A 130-amino-acid polypeptide reads, in one-letter code: uncharacterized protein (130 aa).

Positions 1–19 are cleaved as a signal peptide; that stretch reads MLAPLFLCCLRNLFRKLIS.

It is found in the secreted. This is an uncharacterized protein from Homo sapiens (Human).